Reading from the N-terminus, the 380-residue chain is MANLRKTHPLLKIANDALVDLPAPSNISVWWNFGSLLGLCLATQILTGLFLAMHYTSDISTAFSSVCHICRDVSYGWLIRNIHANGASFFFICIYMHIARGLYYGSYLYKETWNIGVVLLLLTMMTAFVGYVLPWGQMSFWGATVITNLLSAVPYVGGALVQWIWGGFSVDNATLTRFFAFHFLFPFVIAAATVLHLLFLHETGSNNPAGINSDADKISFHPYFSYKDLLGFVAMLLGLTSLALFAPNLLGDPDNFTPANPLVTPPHIKPEWYFLFAYAILRSIPNKLGGVLALLFSILVLMVVPILHTSKQRGLTFRPLTQFLFWALVADMLILTWIGGMPVEHPFIIIGQVASVIYFTIFLVLSPLAGWAEIKALQWA.

A run of 4 helical transmembrane segments spans residues 33-53 (FGSL…FLAM), 77-98 (WLIR…YMHI), 113-133 (WNIG…GYVL), and 178-198 (FFAF…LHLL). Heme b is bound by residues His83 and His97. Positions 182 and 196 each coordinate heme b. His201 contacts a ubiquinone. The next 4 membrane-spanning stretches (helical) occupy residues 226-246 (YKDL…ALFA), 288-308 (LGGV…PILH), 320-340 (LTQF…WIGG), and 347-367 (FIII…VLSP).

The protein belongs to the cytochrome b family. In terms of assembly, the cytochrome bc1 complex contains 3 respiratory subunits (MT-CYB, CYC1 and UQCRFS1), 2 core proteins (UQCRC1 and UQCRC2) and probably 6 low-molecular weight proteins. Heme b is required as a cofactor.

The protein localises to the mitochondrion inner membrane. Component of the ubiquinol-cytochrome c reductase complex (complex III or cytochrome b-c1 complex) that is part of the mitochondrial respiratory chain. The b-c1 complex mediates electron transfer from ubiquinol to cytochrome c. Contributes to the generation of a proton gradient across the mitochondrial membrane that is then used for ATP synthesis. In Oncorhynchus mykiss (Rainbow trout), this protein is Cytochrome b (mt-cyb).